The chain runs to 288 residues: MTLWTFLAMEPAYFITLATVLGLLVGSFLNVVVYRLPIMLERQWQREAHEVLGLPVTEHERFDLCLPASQCTQCGHRIRAWENLPVLSYLALRGRCSACKQRISVRYPLVEVGCALLSMVVAWRYGASVEALVLLPLTWSLLALSLIDHDQQLLPDAIVLPGLWLGLIVNYFGVWVPLPDAVCGAVVGYLSLWTVYWLFKLVTGKEGMGYGDFKLLALLGAWGGWQVLPLTLLLSSVLGALVGVYLLRVRNDSMGTAMPFGPYLAIAGWIAVLWGDEIYASNMQLLGF.

The helical transmembrane segment at 14–34 (FITLATVLGLLVGSFLNVVVY) threads the bilayer. Positions 71, 74, 96, and 99 each coordinate Zn(2+). 6 consecutive transmembrane segments (helical) span residues 103–123 (ISVR…VVAW), 127–147 (ASVE…LSLI), 158–178 (IVLP…WVPL), 182–202 (VCGA…FKLV), 227–247 (VLPL…VYLL), and 254–274 (MGTA…AVLW).

This sequence belongs to the peptidase A24 family. The cofactor is Zn(2+).

It is found in the cell inner membrane. It carries out the reaction Typically cleaves a -Gly-|-Phe- bond to release an N-terminal, basic peptide of 5-8 residues from type IV prepilin, and then N-methylates the new N-terminal amino group, the methyl donor being S-adenosyl-L-methionine.. Its function is as follows. Plays an essential role in type IV pili and type II pseudopili formation by proteolytically removing the leader sequence from substrate proteins and subsequently monomethylating the alpha-amino group of the newly exposed N-terminal phenylalanine. The chain is Prepilin leader peptidase/N-methyltransferase (pilD) from Pseudomonas putida (Arthrobacter siderocapsulatus).